A 1113-amino-acid chain; its full sequence is Protein translocase subunit SecA (1113 aa).

Residues Q175, G193–T197, and D694 contribute to the ATP site. The span at R1042–A1072 shows a compositional bias: basic and acidic residues. The disordered stretch occupies residues R1042 to L1113. Residues C1097, C1099, C1108, and H1109 each contribute to the Zn(2+) site. Positions K1103–L1113 are enriched in basic residues.

This sequence belongs to the SecA family. Monomer and homodimer. Part of the essential Sec protein translocation apparatus which comprises SecA, SecYEG and auxiliary proteins SecDF. Other proteins may also be involved. Zn(2+) is required as a cofactor.

Its subcellular location is the cell inner membrane. It is found in the cytoplasm. It carries out the reaction ATP + H2O + cellular proteinSide 1 = ADP + phosphate + cellular proteinSide 2.. In terms of biological role, part of the Sec protein translocase complex. Interacts with the SecYEG preprotein conducting channel. Has a central role in coupling the hydrolysis of ATP to the transfer of proteins into and across the cell membrane, serving as an ATP-driven molecular motor driving the stepwise translocation of polypeptide chains across the membrane. This is Protein translocase subunit SecA from Porphyromonas gingivalis (strain ATCC 33277 / DSM 20709 / CIP 103683 / JCM 12257 / NCTC 11834 / 2561).